Reading from the N-terminus, the 187-residue chain is Peptidyl-tRNA hydrolase (187 aa).

Tyrosine 18 lines the tRNA pocket. Histidine 23 serves as the catalytic Proton acceptor. Residues phenylalanine 65, asparagine 67, and asparagine 113 each contribute to the tRNA site.

It belongs to the PTH family. Monomer.

The protein resides in the cytoplasm. The enzyme catalyses an N-acyl-L-alpha-aminoacyl-tRNA + H2O = an N-acyl-L-amino acid + a tRNA + H(+). In terms of biological role, hydrolyzes ribosome-free peptidyl-tRNAs (with 1 or more amino acids incorporated), which drop off the ribosome during protein synthesis, or as a result of ribosome stalling. Catalyzes the release of premature peptidyl moieties from peptidyl-tRNA molecules trapped in stalled 50S ribosomal subunits, and thus maintains levels of free tRNAs and 50S ribosomes. This chain is Peptidyl-tRNA hydrolase, found in Coxiella burnetii (strain CbuG_Q212) (Coxiella burnetii (strain Q212)).